The sequence spans 188 residues: A-type ATP synthase subunit E (188 aa).

This sequence belongs to the V-ATPase E subunit family. As to quaternary structure, has multiple subunits with at least A(3), B(3), C, D, E, F, H, I and proteolipid K(x).

It localises to the cell membrane. Its function is as follows. Component of the A-type ATP synthase that produces ATP from ADP in the presence of a proton gradient across the membrane. This chain is A-type ATP synthase subunit E, found in Archaeoglobus fulgidus (strain ATCC 49558 / DSM 4304 / JCM 9628 / NBRC 100126 / VC-16).